A 789-amino-acid polypeptide reads, in one-letter code: Cadherin-6 (789 aa).

The signal sequence occupies residues 1 to 18 (MRTYRYFLLLFWVGQPYP). Positions 19–53 (TFSNPLSKRTSGFPAKRRALELSANSRNELSRSKR) are excised as a propeptide. 5 Cadherin domains span residues 54–159 (SWMW…EPIF), 160–268 (TKDV…PPRF), 269–383 (PQST…PPVF), 384–486 (SKPA…DNAP), and 487–608 (EFAE…LIHP). The Extracellular portion of the chain corresponds to 54–615 (SWMWNQFFLL…IHPTGLSTGA (562 aa)). N255 carries N-linked (GlcNAc...) asparagine glycosylation. The segment at 259-288 (TDVNDNPPRFPQSTYQFKTPESSPPGTPIG) is disordered. Polar residues predominate over residues 269–279 (PQSTYQFKTPE). N-linked (GlcNAc...) asparagine glycans are attached at residues N399, N437, N455, and N536. The helical transmembrane segment at 616-636 (LVAILLCIVILLVTVVLFAAL) threads the bilayer. Residues 637 to 789 (RRQRKKEPLI…YGGMDSDKDS (153 aa)) lie on the Cytoplasmic side of the membrane. Phosphoserine is present on residues S785 and S789.

Highly expressed in kidney and brain.

Its subcellular location is the cell membrane. In terms of biological role, cadherins are calcium-dependent cell adhesion proteins. They preferentially interact with themselves in a homophilic manner in connecting cells; cadherins may thus contribute to the sorting of heterogeneous cell types. The protein is Cadherin-6 (Cdh6) of Rattus norvegicus (Rat).